Consider the following 33-residue polypeptide: Brevinin-2Ef (33 aa).

A disulfide bond links C27 and C33.

In terms of tissue distribution, expressed by the skin glands.

The protein resides in the secreted. Its function is as follows. Shows antibacterial activity against representative Gram-negative and Gram-positive bacterial species, and hemolytic activity. The protein is Brevinin-2Ef of Pelophylax ridibundus (Marsh frog).